A 203-amino-acid polypeptide reads, in one-letter code: MKSRNGPLRVGIGGPVGSGKTALTEKLCKAMRDDYSVAVVTNDIYTTEDAEALVRMQALPSDRIVGVETGGCPHTAIREDATINLQAIAGLNQRIPDLDVVFIESGGDNLAATFSPDLADITIYVISVCQGEEIPRKGGPGITRSDLLVINKKDLAPYVGADLEVKDRDATRMRASRPFVFSDMKRGDGVSSIVSFLREQGGL.

A GTP-binding site is contributed by 14 to 21 (GPVGSGKT).

Belongs to the SIMIBI class G3E GTPase family. UreG subfamily. As to quaternary structure, homodimer. UreD, UreF and UreG form a complex that acts as a GTP-hydrolysis-dependent molecular chaperone, activating the urease apoprotein by helping to assemble the nickel containing metallocenter of UreC. The UreE protein probably delivers the nickel.

Its subcellular location is the cytoplasm. Functionally, facilitates the functional incorporation of the urease nickel metallocenter. This process requires GTP hydrolysis, probably effectuated by UreG. The sequence is that of Urease accessory protein UreG from Rhizobium leguminosarum bv. viciae.